We begin with the raw amino-acid sequence, 344 residues long: GTP 3',8-cyclase (344 aa).

The 226-residue stretch at 19 to 244 folds into the Radical SAM core domain; the sequence is PFGRTISYLR…MDLAESTGGP (226 aa). R28 is a GTP binding site. Residues C35 and C39 each coordinate [4Fe-4S] cluster. An S-adenosyl-L-methionine-binding site is contributed by Y41. C42 serves as a coordination point for [4Fe-4S] cluster. R77 is a binding site for GTP. G81 contributes to the S-adenosyl-L-methionine binding site. Residue T111 coordinates GTP. Residue S135 coordinates S-adenosyl-L-methionine. K171 provides a ligand contact to GTP. M205 is an S-adenosyl-L-methionine binding site. Positions 268 and 271 each coordinate [4Fe-4S] cluster. A GTP-binding site is contributed by 273–275; the sequence is RVR. C285 provides a ligand contact to [4Fe-4S] cluster.

This sequence belongs to the radical SAM superfamily. MoaA family. As to quaternary structure, monomer and homodimer. [4Fe-4S] cluster is required as a cofactor.

The enzyme catalyses GTP + AH2 + S-adenosyl-L-methionine = (8S)-3',8-cyclo-7,8-dihydroguanosine 5'-triphosphate + 5'-deoxyadenosine + L-methionine + A + H(+). It participates in cofactor biosynthesis; molybdopterin biosynthesis. Catalyzes the cyclization of GTP to (8S)-3',8-cyclo-7,8-dihydroguanosine 5'-triphosphate. The chain is GTP 3',8-cyclase from Bradyrhizobium diazoefficiens (strain JCM 10833 / BCRC 13528 / IAM 13628 / NBRC 14792 / USDA 110).